The primary structure comprises 92 residues: Small ribosomal subunit protein uS19 (92 aa).

This sequence belongs to the universal ribosomal protein uS19 family.

Functionally, protein S19 forms a complex with S13 that binds strongly to the 16S ribosomal RNA. The chain is Small ribosomal subunit protein uS19 from Proteus mirabilis (strain HI4320).